Reading from the N-terminus, the 249-residue chain is Anti-H(O) lectin 2 (249 aa).

Residue Asn-118 is glycosylated (N-linked (GlcNAc...) asparagine). Glu-130 and Asp-132 together coordinate Mn(2+). Asp-132, Tyr-134, Asn-140, and Asp-145 together coordinate Ca(2+). Asp-145 and His-148 together coordinate Mn(2+). The N-linked (GlcNAc...) asparagine glycan is linked to Asn-245.

The protein belongs to the leguminous lectin family.

Functionally, di-N-acetylchitobiose specific lectin. The chain is Anti-H(O) lectin 2 from Ulex europaeus (Furze).